A 529-amino-acid polypeptide reads, in one-letter code: Na(+)/H(+) antiporter NhaB (529 aa).

The next 12 helical transmembrane spans lie at 13 to 33 (FLGKAPDWYKVAIISFLIINP), 34 to 54 (IVFFFVDPFVAGWLLVVEFIF), 90 to 110 (LVANIEVLLLLVFMVAGIYFM), 113 to 133 (LLLFIFTKILLGIRSKAILSL), 136 to 156 (CFAAAFLSAFLDALTVIAVVI), 205 to 225 (LLMHAGVGTALGGVTTMVGEP), 241 to 261 (FLIRMAPVTLPVFVCGLLTCF), 306 to 326 (GLIAVWLIVGLALHLAAVGLI), 327 to 347 (GLSVIILATAFTGVIEEHSLG), 351 to 371 (EEALPFTALLAVFFSIVAVII), 451 to 471 (ATPNGQAAFLFLLTSALAPLI), and 479 to 499 (VIMALPYTIVLALVGLFGIVF).

This sequence belongs to the NhaB Na(+)/H(+) (TC 2.A.34) antiporter family.

The protein resides in the cell inner membrane. The enzyme catalyses 2 Na(+)(in) + 3 H(+)(out) = 2 Na(+)(out) + 3 H(+)(in). Its function is as follows. Na(+)/H(+) antiporter that extrudes sodium in exchange for external protons. The sequence is that of Na(+)/H(+) antiporter NhaB from Vibrio vulnificus (strain CMCP6).